Here is a 191-residue protein sequence, read N- to C-terminus: Pyridoxal 5'-phosphate synthase subunit PdxT (191 aa).

46–48 (GES) contacts L-glutamine. Cysteine 78 (nucleophile) is an active-site residue. L-glutamine-binding positions include arginine 105 and 133–134 (IR). Residues histidine 169 and glutamate 171 each act as charge relay system in the active site.

It belongs to the glutaminase PdxT/SNO family. In the presence of PdxS, forms a dodecamer of heterodimers. Only shows activity in the heterodimer.

It carries out the reaction aldehydo-D-ribose 5-phosphate + D-glyceraldehyde 3-phosphate + L-glutamine = pyridoxal 5'-phosphate + L-glutamate + phosphate + 3 H2O + H(+). The catalysed reaction is L-glutamine + H2O = L-glutamate + NH4(+). The protein operates within cofactor biosynthesis; pyridoxal 5'-phosphate biosynthesis. Functionally, catalyzes the hydrolysis of glutamine to glutamate and ammonia as part of the biosynthesis of pyridoxal 5'-phosphate. The resulting ammonia molecule is channeled to the active site of PdxS. The sequence is that of Pyridoxal 5'-phosphate synthase subunit PdxT from Fervidobacterium nodosum (strain ATCC 35602 / DSM 5306 / Rt17-B1).